A 201-amino-acid polypeptide reads, in one-letter code: Glycerol-3-phosphate acyltransferase (201 aa).

The next 5 membrane-spanning stretches (helical) occupy residues 9–29, 60–80, 86–106, 116–136, and 153–173; these read LTLI…FGLI, LAAA…LVAS, AAIG…WIGF, LGVL…VWIV, and IVVP…LFAI.

Belongs to the PlsY family. In terms of assembly, probably interacts with PlsX.

The protein resides in the cell inner membrane. It catalyses the reaction an acyl phosphate + sn-glycerol 3-phosphate = a 1-acyl-sn-glycero-3-phosphate + phosphate. It functions in the pathway lipid metabolism; phospholipid metabolism. Its function is as follows. Catalyzes the transfer of an acyl group from acyl-phosphate (acyl-PO(4)) to glycerol-3-phosphate (G3P) to form lysophosphatidic acid (LPA). This enzyme utilizes acyl-phosphate as fatty acyl donor, but not acyl-CoA or acyl-ACP. In Brucella anthropi (strain ATCC 49188 / DSM 6882 / CCUG 24695 / JCM 21032 / LMG 3331 / NBRC 15819 / NCTC 12168 / Alc 37) (Ochrobactrum anthropi), this protein is Glycerol-3-phosphate acyltransferase.